Here is a 122-residue protein sequence, read N- to C-terminus: Large ribosomal subunit protein uL14 (122 aa).

This sequence belongs to the universal ribosomal protein uL14 family. As to quaternary structure, part of the 50S ribosomal subunit. Forms a cluster with proteins L3 and L19. In the 70S ribosome, L14 and L19 interact and together make contacts with the 16S rRNA in bridges B5 and B8.

Functionally, binds to 23S rRNA. Forms part of two intersubunit bridges in the 70S ribosome. In Chloroflexus aggregans (strain MD-66 / DSM 9485), this protein is Large ribosomal subunit protein uL14.